Here is a 344-residue protein sequence, read N- to C-terminus: L-rhamnose-proton symporter (344 aa).

10 consecutive transmembrane segments (helical) span residues 4 to 24 (AITM…CFYA), 38 to 58 (WSVG…ALLL), 68 to 88 (FNLS…IGNI), 101 to 121 (MGIG…TPII), 137 to 157 (TLLG…AGQL), 175 to 195 (LLLA…MNAA), 214 to 234 (LPSY…FCFI), 259 to 279 (ILLS…YAWG), 290 to 310 (MSWM…GLVL), and 321 to 341 (VAVL…VGLG).

The protein belongs to the L-rhamnose transporter (TC 2.A.7.6) family.

It localises to the cell inner membrane. It carries out the reaction L-rhamnopyranose(in) + H(+)(in) = L-rhamnopyranose(out) + H(+)(out). Uptake of L-rhamnose across the cytoplasmic membrane with the concomitant transport of protons into the cell (symport system). The chain is L-rhamnose-proton symporter from Salmonella agona (strain SL483).